Consider the following 398-residue polypeptide: Na(+)/H(+) antiporter NhaA (398 aa).

Transmembrane regions (helical) follow at residues 14–34, 60–80, 96–116, 125–145, 155–175, 179–199, 214–234, 263–283, 292–312, 330–350, and 362–382; these read AAGV…NWSV, LLLW…GLEV, MLPL…FLLF, VGWA…LTLL, VFLL…IALF, QIFW…AYLN, IVLW…GVIV, FLII…GIVL, LGIA…LSWL, IVAV…ITLL, and YAKL…YLAL.

This sequence belongs to the NhaA Na(+)/H(+) (TC 2.A.33) antiporter family.

It localises to the cell inner membrane. The enzyme catalyses Na(+)(in) + 2 H(+)(out) = Na(+)(out) + 2 H(+)(in). Na(+)/H(+) antiporter that extrudes sodium in exchange for external protons. In Pectobacterium carotovorum subsp. carotovorum (strain PC1), this protein is Na(+)/H(+) antiporter NhaA.